Here is a 1040-residue protein sequence, read N- to C-terminus: MQVLPPSSTGGPSRLFIMRPVATTLLMVAILLAGIIGYRALPVSALPEVDYPTIQVVTLYPGASPDVMTSAVTAPLERQFGQMSGLKQMSSQSSGGASVITLQFQLTLPLDVAEQEVQAAINAATNLLPSDLPNPPVYSKVNPADPPIMTLAVTSTAMPMTQVEDMVETRVAQKISQISGVGLVTLSGGQRPAVRVKLNAQAIAALGLTSETVRTAITGANVNSAKGSLDGPSRAVTLSANDQMQSAEEYRQLIIAYQNGAPIRLGDVATVEQGAENSWLGAWANKEQAIVMNVQRQPGANIISTADSIRQMLPQLTESLPKSVKVTVLSDRTTNIRASVDDTQFELMMAIALVVMIIYLFLRNIPATIIPGVAVPLSLIGTFAVMVFLDFSINNLTLMALTIATGFVVDDAIVVIENISRYIEKGEKPLAAALKGAGEIGFTIISLTFSLIAVLIPLLFMGDIVGRLFREFAITLAVAILISAVVSLTLTPMMCARMLSQESLRKQNRFSRASEKMFDRIIAAYGRGLAKVLNHPWLTLSVALSTLLLSVLLWVFIPKGFFPVQDNGIIQGTLQAPQSSSFANMAQRQRQVADVILQDPAVQSLTSFVGVDGTNPSLNSARLQINLKPLDERDDRVQKVIARLQTAVDKVPGVDLFLQPTQDLTIDTQVSRTQYQFTLQATSLDALSTWVPQLMEKLQQLPQLSDVSSDWQDKGLVAYVNVDRDSASRLGISMADVDNALYNAFGQRLISTIYTQANQYRVVLEHNTENTPGLAALDTIRLTSSDGGVVPLSSIAKIEQRFAPLSINHLDQFPVTTISFNVPDNYSLGDAVQAIMDTEKTLNLPVDITTQFQGSTLAFQSALGSTVWLIVAAVVAMYIVLGILYESFIHPITILSTLPTAGVGALLALMIAGSELDVIAIIGIILLIGIVKKNAIMMIDFALAAEREQGMSPREAIYQACLLRFRPILMTTLAALLGALPLMLSTGVGAELRRPLGIGMVGGLIVSQVLTLFTTPVIYLLFDRLALWTKSRFARHEEEA.

The next 12 helical transmembrane spans lie at 16 to 36 (FIMR…AGII), 347 to 367 (LMMA…NIPA), 369 to 389 (IIPG…MVFL), 396 to 416 (LTLM…IVVI), 440 to 460 (IGFT…PLLF), 472 to 492 (FAIT…TLTP), 537 to 557 (WLTL…WVFI), 863 to 883 (LGST…VLGI), 888 to 908 (FIHP…ALLA), 911 to 931 (IAGS…IGIV), 968 to 988 (ILMT…STGV), and 998 to 1018 (IGMV…TPVI).

This sequence belongs to the resistance-nodulation-cell division (RND) (TC 2.A.6) family. MdtB subfamily. In terms of assembly, part of a tripartite efflux system composed of MdtA, MdtB and MdtC. MdtB forms a heteromultimer with MdtC.

The protein resides in the cell inner membrane. Its function is as follows. The MdtABC tripartite complex confers resistance against novobiocin and deoxycholate. This chain is Multidrug resistance protein MdtB, found in Escherichia coli O45:K1 (strain S88 / ExPEC).